Here is a 281-residue protein sequence, read N- to C-terminus: MGIKKYKPTSAARRLMTVSDFADITKDSPEKSLTEPLKRSGGRNVHGHITRRHQGGGHKRRYRVIDFKRRDKDGVPAKVVAVEYDPNRTANIALLHYADGEKRYILAPVGLSVGDTVFAGEGADIRPGNSLPLQNIPVGTVIHNVELKPGRGAQVIRSAGTSGQLMAKEDRYAQVRMPSGTVRKVLIECRATVGQVGNIEHEIIRIGKAGKSRWLGIRPTVRGLAMNPVDHPHGGGEGKSGQGNPHPVSPWGKKTKGLTTRTNKRTDKFIVSGRRQGARSQ.

The segment covering 27-38 has biased composition (basic and acidic residues); that stretch reads DSPEKSLTEPLK. Disordered regions lie at residues 27–59 and 225–281; these read DSPE…GGHK and AMNP…ARSQ. The segment covering 45 to 59 has biased composition (basic residues); the sequence is VHGHITRRHQGGGHK.

Belongs to the universal ribosomal protein uL2 family. As to quaternary structure, part of the 50S ribosomal subunit. Forms a bridge to the 30S subunit in the 70S ribosome.

In terms of biological role, one of the primary rRNA binding proteins. Required for association of the 30S and 50S subunits to form the 70S ribosome, for tRNA binding and peptide bond formation. It has been suggested to have peptidyltransferase activity; this is somewhat controversial. Makes several contacts with the 16S rRNA in the 70S ribosome. This is Large ribosomal subunit protein uL2 from Myxococcus xanthus (strain DK1622).